The sequence spans 514 residues: Lysine--tRNA ligase (514 aa).

2 residues coordinate Mg(2+): Glu-424 and Glu-431.

It belongs to the class-II aminoacyl-tRNA synthetase family. As to quaternary structure, homodimer. Mg(2+) serves as cofactor.

The protein resides in the cytoplasm. The catalysed reaction is tRNA(Lys) + L-lysine + ATP = L-lysyl-tRNA(Lys) + AMP + diphosphate. This is Lysine--tRNA ligase from Cupriavidus necator (strain ATCC 17699 / DSM 428 / KCTC 22496 / NCIMB 10442 / H16 / Stanier 337) (Ralstonia eutropha).